The primary structure comprises 177 residues: Large ribosomal subunit protein uL6 (177 aa).

It belongs to the universal ribosomal protein uL6 family. Part of the 50S ribosomal subunit.

This protein binds to the 23S rRNA, and is important in its secondary structure. It is located near the subunit interface in the base of the L7/L12 stalk, and near the tRNA binding site of the peptidyltransferase center. This is Large ribosomal subunit protein uL6 from Yersinia enterocolitica serotype O:8 / biotype 1B (strain NCTC 13174 / 8081).